A 116-amino-acid polypeptide reads, in one-letter code: NADH-quinone oxidoreductase subunit A (116 aa).

Helical transmembrane passes span 3–23 (FTLLVVVILTAIALVAVALGI), 61–81 (FAILFLMFDVETVFLFPWAVV), and 85–105 (LGVYGLFSILFFLVILVLGLA).

The protein belongs to the complex I subunit 3 family. As to quaternary structure, NDH-1 is composed of 14 different subunits. Subunits NuoA, H, J, K, L, M, N constitute the membrane sector of the complex.

The protein resides in the cell inner membrane. The enzyme catalyses a quinone + NADH + 5 H(+)(in) = a quinol + NAD(+) + 4 H(+)(out). NDH-1 shuttles electrons from NADH, via FMN and iron-sulfur (Fe-S) centers, to quinones in the respiratory chain. The immediate electron acceptor for the enzyme in this species is believed to be a menaquinone. Couples the redox reaction to proton translocation (for every two electrons transferred, four hydrogen ions are translocated across the cytoplasmic membrane), and thus conserves the redox energy in a proton gradient. This chain is NADH-quinone oxidoreductase subunit A, found in Phocaeicola vulgatus (strain ATCC 8482 / DSM 1447 / JCM 5826 / CCUG 4940 / NBRC 14291 / NCTC 11154) (Bacteroides vulgatus).